The sequence spans 31 residues: Cytochrome b6-f complex subunit 6 (31 aa).

The helical transmembrane segment at 4–24 threads the bilayer; it reads LTSYFGFLLAALTITPALFIG.

This sequence belongs to the PetL family. The 4 large subunits of the cytochrome b6-f complex are cytochrome b6, subunit IV (17 kDa polypeptide, PetD), cytochrome f and the Rieske protein, while the 4 small subunits are PetG, PetL, PetM and PetN. The complex functions as a dimer.

Its subcellular location is the plastid. It localises to the chloroplast thylakoid membrane. Its function is as follows. Component of the cytochrome b6-f complex, which mediates electron transfer between photosystem II (PSII) and photosystem I (PSI), cyclic electron flow around PSI, and state transitions. PetL is important for photoautotrophic growth as well as for electron transfer efficiency and stability of the cytochrome b6-f complex. The chain is Cytochrome b6-f complex subunit 6 from Agrostis stolonifera (Creeping bentgrass).